A 342-amino-acid polypeptide reads, in one-letter code: Ribosomal RNA small subunit methyltransferase C (342 aa).

Belongs to the methyltransferase superfamily. RsmC family. Monomer.

Its subcellular location is the cytoplasm. It carries out the reaction guanosine(1207) in 16S rRNA + S-adenosyl-L-methionine = N(2)-methylguanosine(1207) in 16S rRNA + S-adenosyl-L-homocysteine + H(+). Its function is as follows. Specifically methylates the guanine in position 1207 of 16S rRNA in the 30S particle. The polypeptide is Ribosomal RNA small subunit methyltransferase C (Salmonella enteritidis PT4 (strain P125109)).